Consider the following 64-residue polypeptide: Large ribosomal subunit protein bL35 (64 aa).

Over residues 1–28 the composition is skewed to basic residues; sequence MSKAKTHSGAAKRFKKTASGYKHKHAFK. The disordered stretch occupies residues 1–51; sequence MSKAKTHSGAAKRFKKTASGYKHKHAFKSHILTKMTTKRKRQLRGTSLLNA.

The protein belongs to the bacterial ribosomal protein bL35 family.

This is Large ribosomal subunit protein bL35 from Saccharophagus degradans (strain 2-40 / ATCC 43961 / DSM 17024).